Reading from the N-terminus, the 171-residue chain is Lipoprotein signal peptidase (171 aa).

3 helical membrane passes run 12–32 (WYWVAVLVFFADQLSKQWVLA), 67–87 (WQRWLFTIVAVGFSTLLTVWL), and 93–113 (SLLKLNLAYTLVIGGALGNLV). Residues Asp-123 and Asp-141 contribute to the active site. A helical transmembrane segment spans residues 137-157 (FNIADSAICIGAVLIIWDAFL).

The protein belongs to the peptidase A8 family.

It is found in the cell inner membrane. It carries out the reaction Release of signal peptides from bacterial membrane prolipoproteins. Hydrolyzes -Xaa-Yaa-Zaa-|-(S,diacylglyceryl)Cys-, in which Xaa is hydrophobic (preferably Leu), and Yaa (Ala or Ser) and Zaa (Gly or Ala) have small, neutral side chains.. It functions in the pathway protein modification; lipoprotein biosynthesis (signal peptide cleavage). Its function is as follows. This protein specifically catalyzes the removal of signal peptides from prolipoproteins. The sequence is that of Lipoprotein signal peptidase from Shewanella baltica (strain OS223).